Consider the following 129-residue polypeptide: MEHPSTNYTPEQQHEKLKYYVLIPKHLWSYIKYGTHVRYYTTQNVFRVGGFVLQNPYEAVIKNEVKTAIRLQNSFNTKAKGHVTWAVPYDNISKLYAKPDAIMLTIQENVEKALHALNQNVLTLASKIR.

It belongs to the asfivirus C129R family.

The protein localises to the virion. Its function is as follows. Plays a role in the inhibition of type I interferon signaling pathway. Mechanistically, specifically interacts with 2',3'-cGAMP and cleaves it via its phosphodiesterase activity. In turn, prevents 2',3'-cGAMP interaction with host ER-resident STING1 leading to inhibition of downstream signaling pathway and type I interferon production. This is an uncharacterized protein from African swine fever virus (strain Badajoz 1971 Vero-adapted) (Ba71V).